Here is a 325-residue protein sequence, read N- to C-terminus: Beta-ketoacyl-[acyl-carrier-protein] synthase III (325 aa).

Residues Cys-119 and His-252 contribute to the active site. The ACP-binding stretch occupies residues Gln-253–Arg-257. Asn-282 is an active-site residue.

It belongs to the thiolase-like superfamily. FabH family. In terms of assembly, homodimer.

It localises to the cytoplasm. It carries out the reaction malonyl-[ACP] + acetyl-CoA + H(+) = 3-oxobutanoyl-[ACP] + CO2 + CoA. It functions in the pathway lipid metabolism; fatty acid biosynthesis. In terms of biological role, catalyzes the condensation reaction of fatty acid synthesis by the addition to an acyl acceptor of two carbons from malonyl-ACP. Catalyzes the first condensation reaction which initiates fatty acid synthesis and may therefore play a role in governing the total rate of fatty acid production. Possesses both acetoacetyl-ACP synthase and acetyl transacylase activities. Its substrate specificity determines the biosynthesis of branched-chain and/or straight-chain of fatty acids. This is Beta-ketoacyl-[acyl-carrier-protein] synthase III from Polaromonas naphthalenivorans (strain CJ2).